A 355-amino-acid chain; its full sequence is Peptide chain release factor 1 (355 aa).

An N5-methylglutamine modification is found at glutamine 233. The disordered stretch occupies residues glutamate 280–phenylalanine 310.

Belongs to the prokaryotic/mitochondrial release factor family. In terms of processing, methylated by PrmC. Methylation increases the termination efficiency of RF1.

It is found in the cytoplasm. Its function is as follows. Peptide chain release factor 1 directs the termination of translation in response to the peptide chain termination codons UAG and UAA. This Rickettsia canadensis (strain McKiel) protein is Peptide chain release factor 1.